A 519-amino-acid chain; its full sequence is Nitrogen fixation regulatory protein (519 aa).

The region spanning 23–93 is the PAS 1 domain; that stretch reads LPEIFRQTVE…QALWGRLAQK (71 aa). Residues 94 to 148 form the PAC domain; that stretch reads KPWSGVLVNRRKDKTLYLAELTVAPVLNEAGETIYYLGMHRDTSELHELEQRVNN. The PAS 2 domain maps to 151–217; that stretch reads LMIEAVVNAA…FETLENQGSA (67 aa). Residues 302–517 form the Histidine kinase domain; it reads AAIHRLQGPV…RIVVELPFSA (216 aa). A Phosphohistidine; by autocatalysis modification is found at H305.

Requires FAD as cofactor.

The enzyme catalyses ATP + protein L-histidine = ADP + protein N-phospho-L-histidine.. In terms of biological role, required for the inhibition of NifA activity in response to oxygen and low level of fixed nitrogen. The sequence is that of Nitrogen fixation regulatory protein (nifL) from Azotobacter vinelandii.